The sequence spans 372 residues: Oxysterol-binding protein 3 (372 aa).

Residues methionine 1–glutamate 10 are compositionally biased toward basic and acidic residues. The tract at residues methionine 1 to glutamate 25 is disordered.

This sequence belongs to the OSBP family.

The sequence is that of Oxysterol-binding protein 3 (osbC) from Dictyostelium discoideum (Social amoeba).